A 104-amino-acid chain; its full sequence is ATP-dependent Clp protease adapter protein ClpS (104 aa).

The protein belongs to the ClpS family. As to quaternary structure, binds to the N-terminal domain of the chaperone ClpA.

Its function is as follows. Involved in the modulation of the specificity of the ClpAP-mediated ATP-dependent protein degradation. This chain is ATP-dependent Clp protease adapter protein ClpS, found in Bordetella avium (strain 197N).